The primary structure comprises 423 residues: Histidine--tRNA ligase (423 aa).

This sequence belongs to the class-II aminoacyl-tRNA synthetase family. Homodimer.

The protein resides in the cytoplasm. It catalyses the reaction tRNA(His) + L-histidine + ATP = L-histidyl-tRNA(His) + AMP + diphosphate + H(+). The sequence is that of Histidine--tRNA ligase from Moorella thermoacetica (strain ATCC 39073 / JCM 9320).